Consider the following 122-residue polypeptide: Large ribosomal subunit protein uL14 (122 aa).

It belongs to the universal ribosomal protein uL14 family. As to quaternary structure, part of the 50S ribosomal subunit. Forms a cluster with proteins L3 and L19. In the 70S ribosome, L14 and L19 interact and together make contacts with the 16S rRNA in bridges B5 and B8.

Functionally, binds to 23S rRNA. Forms part of two intersubunit bridges in the 70S ribosome. The protein is Large ribosomal subunit protein uL14 of Macrococcus caseolyticus (strain JCSC5402) (Macrococcoides caseolyticum).